The primary structure comprises 130 residues: Small ribosomal subunit protein uS11 (130 aa).

This sequence belongs to the universal ribosomal protein uS11 family. Part of the 30S ribosomal subunit. Interacts with proteins S7 and S18. Binds to IF-3.

Functionally, located on the platform of the 30S subunit, it bridges several disparate RNA helices of the 16S rRNA. Forms part of the Shine-Dalgarno cleft in the 70S ribosome. This is Small ribosomal subunit protein uS11 from Ruegeria pomeroyi (strain ATCC 700808 / DSM 15171 / DSS-3) (Silicibacter pomeroyi).